Consider the following 158-residue polypeptide: PTS system fructose-specific EIIB component (158 aa).

The PTS EIIB type-2 domain maps to 1 to 98 (MKLVAVTSCP…AEAVVQKAVE (98 aa)). Cys-9 functions as the Phosphocysteine intermediate in the catalytic mechanism. The residue at position 9 (Cys-9) is a Phosphocysteine; by EIIA. Residues 104 to 147 (KTGSVTFGSGDDGEDADVGADDSSDDADAAESDEPVRRGGDPEK) form a disordered region. Acidic residues predominate over residues 114–136 (DDGEDADVGADDSSDDADAAESD). Positions 137-147 (EPVRRGGDPEK) are enriched in basic and acidic residues.

The protein localises to the cytoplasm. The enzyme catalyses D-fructose(out) + N(pros)-phospho-L-histidyl-[protein] = D-fructose 1-phosphate(in) + L-histidyl-[protein]. The phosphoenolpyruvate-dependent sugar phosphotransferase system (sugar PTS), a major carbohydrate active transport system, catalyzes the phosphorylation of incoming sugar substrates concomitantly with their translocation across the cell membrane. The enzyme II PtfABC PTS system is involved in fructose transport. The sequence is that of PTS system fructose-specific EIIB component from Haloferax volcanii (strain ATCC 29605 / DSM 3757 / JCM 8879 / NBRC 14742 / NCIMB 2012 / VKM B-1768 / DS2) (Halobacterium volcanii).